Consider the following 721-residue polypeptide: ATP-dependent zinc metalloprotease FtsH (721 aa).

The Cytoplasmic segment spans residues 1 to 44; the sequence is MYFLKKIVNLFSSKIESEDNNVKKDDLTQPRKQSPEARKRRNRR. A helical membrane pass occupies residues 45 to 65; it reads IIFWLIILLIIGTIIGVIIYF. Over 66-190 the chain is Extracellular; sequence SVRKEYDNVI…AGIPSSGFNP (125 aa). A helical transmembrane segment spans residues 191-211; it reads QVIISPLISIIFFIIFLYIIL. Over 212-721 the chain is Cytoplasmic; that stretch reads RVSKAQSDSL…KDKEKDQKSN (510 aa). 279–286 is a binding site for ATP; sequence GPPGTGKT. Residue His-498 participates in Zn(2+) binding. Glu-499 is a catalytic residue. Residues His-502 and Asp-577 each coordinate Zn(2+). The disordered stretch occupies residues 686-721; sequence NKREASQKQANSSVEEAKVVDDEESIKDKEKDQKSN. Basic and acidic residues predominate over residues 700–721; that stretch reads EEAKVVDDEESIKDKEKDQKSN.

The protein in the central section; belongs to the AAA ATPase family. In the C-terminal section; belongs to the peptidase M41 family. In terms of assembly, homohexamer. It depends on Zn(2+) as a cofactor.

It is found in the cell membrane. Acts as a processive, ATP-dependent zinc metallopeptidase for both cytoplasmic and membrane proteins. Plays a role in the quality control of integral membrane proteins. In Ureaplasma parvum serovar 3 (strain ATCC 27815 / 27 / NCTC 11736), this protein is ATP-dependent zinc metalloprotease FtsH.